Consider the following 49-residue polypeptide: Sperm protamine P1 (49 aa).

It belongs to the protamine P1 family. Testis.

The protein resides in the nucleus. Its subcellular location is the chromosome. Functionally, protamines substitute for histones in the chromatin of sperm during the haploid phase of spermatogenesis. They compact sperm DNA into a highly condensed, stable and inactive complex. The protein is Sperm protamine P1 (PRM1) of Pteropus hypomelanus (Island flying fox).